The chain runs to 273 residues: Giardin subunit beta (273 aa).

The interval 1-19 (MSMFTSTRTLTQTMDKPDD) is nonhelical region. Residues 20 to 273 (LTRSATETAV…GGLSMVTKHQ (254 aa)) form a rod region. Coiled coils occupy residues 123–175 (DTLN…YDQL) and 211–263 (NTKL…SKIQ).

Belongs to the SF-assemblin family. Interacts with BOP1 (via C-terminal WD repeats).

It is found in the cytoplasm. It localises to the cytoskeleton. In terms of biological role, giardins are involved in parasite attachment to the intestinal mucosa and in the cytoskeletal disassembly and reassembly that marks the transition from infectious trophozoite to transmissible cyst. They may interact with other cytoskeletal proteins such as microtubules in the microribbons or crossbridges, to maintain the integrity of the ventral disk. The polypeptide is Giardin subunit beta (Giardia intestinalis (Giardia lamblia)).